The sequence spans 424 residues: Adenylosuccinate synthetase (424 aa).

GTP contacts are provided by residues 12-18 and 40-42; these read GDEGKGK and GHT. The active-site Proton acceptor is the Asp-13. Asp-13 and Gly-40 together coordinate Mg(2+). IMP contacts are provided by residues 13-16, 38-41, Thr-130, Arg-144, Asn-220, Thr-235, and Arg-299; these read DEGK and NAGH. His-41 functions as the Proton donor in the catalytic mechanism. 295-301 contributes to the substrate binding site; the sequence is VTTGRKR. Residues Arg-301, 327–329, and 412–414 contribute to the GTP site; these read KLD and GTG.

The protein belongs to the adenylosuccinate synthetase family. In terms of assembly, homodimer. Mg(2+) serves as cofactor.

Its subcellular location is the cytoplasm. The catalysed reaction is IMP + L-aspartate + GTP = N(6)-(1,2-dicarboxyethyl)-AMP + GDP + phosphate + 2 H(+). It functions in the pathway purine metabolism; AMP biosynthesis via de novo pathway; AMP from IMP: step 1/2. Its function is as follows. Plays an important role in the de novo pathway and in the salvage pathway of purine nucleotide biosynthesis. Catalyzes the first committed step in the biosynthesis of AMP from IMP. This Emericella nidulans (strain FGSC A4 / ATCC 38163 / CBS 112.46 / NRRL 194 / M139) (Aspergillus nidulans) protein is Adenylosuccinate synthetase (adB).